The following is a 200-amino-acid chain: Chromophore lyase CpcS/CpeS (200 aa).

Belongs to the CpcS/CpeS biliprotein lyase family.

In terms of biological role, covalently attaches a chromophore to Cys residue(s) of phycobiliproteins. This chain is Chromophore lyase CpcS/CpeS, found in Synechococcus sp. (strain WH8020).